A 203-amino-acid chain; its full sequence is Glycerol-3-phosphate acyltransferase (203 aa).

5 consecutive transmembrane segments (helical) span residues 10–30 (LLAL…GLLI), 59–79 (PAAA…VILA), 87–107 (AAQI…YLKF), 116–136 (FFGT…AIWL), and 168–188 (LVVL…ENII).

Belongs to the PlsY family. In terms of assembly, probably interacts with PlsX.

It is found in the cell inner membrane. The enzyme catalyses an acyl phosphate + sn-glycerol 3-phosphate = a 1-acyl-sn-glycero-3-phosphate + phosphate. The protein operates within lipid metabolism; phospholipid metabolism. In terms of biological role, catalyzes the transfer of an acyl group from acyl-phosphate (acyl-PO(4)) to glycerol-3-phosphate (G3P) to form lysophosphatidic acid (LPA). This enzyme utilizes acyl-phosphate as fatty acyl donor, but not acyl-CoA or acyl-ACP. In Dinoroseobacter shibae (strain DSM 16493 / NCIMB 14021 / DFL 12), this protein is Glycerol-3-phosphate acyltransferase.